The sequence spans 122 residues: Large ribosomal subunit protein uL14 (122 aa).

Belongs to the universal ribosomal protein uL14 family. In terms of assembly, part of the 50S ribosomal subunit. Forms a cluster with proteins L3 and L19. In the 70S ribosome, L14 and L19 interact and together make contacts with the 16S rRNA in bridges B5 and B8.

Functionally, binds to 23S rRNA. Forms part of two intersubunit bridges in the 70S ribosome. The protein is Large ribosomal subunit protein uL14 of Sulfurihydrogenibium sp. (strain YO3AOP1).